A 239-amino-acid polypeptide reads, in one-letter code: MTEVKVAVTIAPEQELSQSTIDDLIQFQDSIDIIELRIDQWTNLNEIAIEKVVEDLQSLKLNKKLLVTYRTSNQGGLGDFGEDDYIQILRKIANCQNIDMLDIEFDQTRSLNILQELIELAHKNQVQVVLSHHNFKETPKLEALKHLFYKMQQLESDYIKVAVMPHGKQDVLNLLNAMSDTADVVSQHVVGIAMSKIGLISRTAQGVFGGSISYGCLDTPKAPGQIHVSTLKKQLSMYE.

3-dehydroquinate-binding positions include 35–37 (ELR) and arginine 70. Histidine 133 acts as the Proton donor/acceptor in catalysis. Catalysis depends on lysine 160, which acts as the Schiff-base intermediate with substrate. 3-dehydroquinate-binding residues include arginine 202 and glutamine 225.

This sequence belongs to the type-I 3-dehydroquinase family. In terms of assembly, homodimer.

It catalyses the reaction 3-dehydroquinate = 3-dehydroshikimate + H2O. Its pathway is metabolic intermediate biosynthesis; chorismate biosynthesis; chorismate from D-erythrose 4-phosphate and phosphoenolpyruvate: step 3/7. Its function is as follows. Involved in the third step of the chorismate pathway, which leads to the biosynthesis of aromatic amino acids. Catalyzes the cis-dehydration of 3-dehydroquinate (DHQ) and introduces the first double bond of the aromatic ring to yield 3-dehydroshikimate. The chain is 3-dehydroquinate dehydratase from Staphylococcus saprophyticus subsp. saprophyticus (strain ATCC 15305 / DSM 20229 / NCIMB 8711 / NCTC 7292 / S-41).